The sequence spans 560 residues: (E)-beta-farnesene synthase (560 aa).

Mg(2+) contacts are provided by Asp312, Asp316, Asp457, and Glu465. The short motif at 312–316 is the DDXXD motif element; the sequence is DDTFD.

It belongs to the terpene synthase family. It depends on Mg(2+) as a cofactor. The cofactor is Co(2+). Mn(2+) is required as a cofactor.

Its subcellular location is the cytoplasm. The enzyme catalyses (2E,6E)-farnesyl diphosphate = (E)-beta-farnesene + diphosphate. It functions in the pathway secondary metabolite biosynthesis; terpenoid biosynthesis. Functionally, sesquiterpene cyclase catalyzing the production of beta-farnesene from farnesyl diphosphate. This is (E)-beta-farnesene synthase from Citrus junos (Yuzu).